A 157-amino-acid polypeptide reads, in one-letter code: Endoribonuclease YbeY (157 aa).

Zn(2+) contacts are provided by H114, H118, and H124.

This sequence belongs to the endoribonuclease YbeY family. Requires Zn(2+) as cofactor.

Its subcellular location is the cytoplasm. In terms of biological role, single strand-specific metallo-endoribonuclease involved in late-stage 70S ribosome quality control and in maturation of the 3' terminus of the 16S rRNA. The chain is Endoribonuclease YbeY from Edwardsiella ictaluri (strain 93-146).